Here is a 107-residue protein sequence, read N- to C-terminus: High mobility group protein HMG-I/HMG-Y (107 aa).

Positions 1–13 (MSESGSKSSQPLA) are enriched in polar residues. The interval 1–107 (MSESGSKSSQ…ISQESSEEEQ (107 aa)) is disordered. Ser-2 is subject to N-acetylserine. Lys-7 is modified (N6-acetyllysine). Ser-8 is subject to ADP-ribosylserine. Residue Ser-9 is modified to ADP-ribosylserine; alternate. Residue Ser-9 is modified to Phosphoserine; alternate. Lys-15 bears the N6-acetyllysine; alternate mark. A Glycyl lysine isopeptide (Lys-Gly) (interchain with G-Cter in SUMO2); alternate cross-link involves residue Lys-15. Residues 15–24 (KQEKDGTEKR) are compositionally biased toward basic and acidic residues. The segment at residues 21-31 (TEKRGRGRPRK) is a DNA-binding region (a.T hook 1). Position 26 is an asymmetric dimethylarginine; alternate (Arg-26). Omega-N-methylarginine; alternate is present on Arg-26. Arg-26 carries the post-translational modification Symmetric dimethylarginine; alternate. Ser-36 carries the post-translational modification Phosphoserine; by HIPK2 and CDC2. The residue at position 39 (Thr-39) is a Phosphothreonine. A phosphoserine mark is found at Ser-44 and Ser-49. At Thr-53 the chain carries Phosphothreonine; by HIPK2 and CDC2. DNA-binding regions (a.T hook) lie at residues 53–63 (TPKRPRGRPKG) and 78–89 (APGRKPRGRPKK). The tract at residues 53–77 (TPKRPRGRPKGSKNKGAAKTRKVTT) is interaction with HIPK2. Over residues 55 to 74 (KRPRGRPKGSKNKGAAKTRK) the composition is skewed to basic residues. 2 positions are modified to asymmetric dimethylarginine; by PRMT6; alternate: Arg-58 and Arg-60. Arg-58 and Arg-60 each carry omega-N-methylarginine; by PRMT6; alternate. Positions 93 to 107 (EEEEGISQESSEEEQ) are enriched in acidic residues. Phosphoserine occurs at positions 99, 102, and 103.

It belongs to the HMGA family. In terms of assembly, interacts with HIPK2. Isoforms HMG-I and HMG-Y can be phosphorylated by HIPK2. Phosphorylation may modulate DNA-binding affinity. In terms of processing, methylation at Arg-58 is mutually exclusive with methylation at Arg-60.

It is found in the nucleus. The protein localises to the chromosome. In terms of biological role, HMG-I/Y bind preferentially to the minor groove of A+T rich regions in double-stranded DNA. It is suggested that these proteins could function in nucleosome phasing and in the 3'-end processing of mRNA transcripts. They are also involved in the transcription regulation of genes containing, or in close proximity to A+T-rich regions. In Mus musculus (Mouse), this protein is High mobility group protein HMG-I/HMG-Y (Hmga1).